Consider the following 781-residue polypeptide: Translation initiation factor IF-2 (781 aa).

The interval 44–195 (RQLDNAVDGT…TPPKPKELPE (152 aa)) is disordered. The span at 53 to 65 (TNKKAEAPKKETT) shows a compositional bias: basic and acidic residues. The segment covering 66–81 (SNENGNSKGPNKPNMT) has biased composition (polar residues). Positions 82-93 (NSNEKSNKPNKP) are enriched in low complexity. The span at 115-126 (KPANTGNQTQAS) shows a compositional bias: polar residues. A compositionally biased stretch (low complexity) spans 127 to 169 (GNQQAGGQKRNNNNNSNRPGGGNPNRPGGNNRPNRGGNFNNKG). Residues 282–451 (ERPPVVTIMG…LLVSEVEELK (170 aa)) form the tr-type G domain. The segment at 291–298 (GHVDHGKT) is G1. 291 to 298 (GHVDHGKT) is a binding site for GTP. The interval 316 to 320 (GITQH) is G2. Residues 337 to 340 (DTPG) form a G3 region. Residues 337 to 341 (DTPGH) and 391 to 394 (NKID) contribute to the GTP site. The segment at 391 to 394 (NKID) is G4. Residues 427–429 (SAK) form a G5 region.

The protein belongs to the TRAFAC class translation factor GTPase superfamily. Classic translation factor GTPase family. IF-2 subfamily.

Its subcellular location is the cytoplasm. One of the essential components for the initiation of protein synthesis. Protects formylmethionyl-tRNA from spontaneous hydrolysis and promotes its binding to the 30S ribosomal subunits. Also involved in the hydrolysis of GTP during the formation of the 70S ribosomal complex. In Listeria monocytogenes serotype 4a (strain HCC23), this protein is Translation initiation factor IF-2.